A 413-amino-acid polypeptide reads, in one-letter code: SWIRM domain-containing protein FUN19 (413 aa).

The span at Lys35–Ser51 shows a compositional bias: low complexity. 3 disordered regions span residues Lys35–Asn55, Tyr189–Ser211, and Tyr249–Ser271. The residue at position 194 (Thr194) is a Phosphothreonine. A compositionally biased stretch (low complexity) spans Ser200 to Ser211. Ser207 and Ser211 each carry phosphoserine. Residues Leu316 to Leu413 form the SWIRM domain.

This chain is SWIRM domain-containing protein FUN19 (FUN19), found in Saccharomyces cerevisiae (strain ATCC 204508 / S288c) (Baker's yeast).